The chain runs to 350 residues: 4-hydroxy-3-methylbut-2-en-1-yl diphosphate synthase (flavodoxin) (350 aa).

Cys263, Cys266, Cys298, and Glu305 together coordinate [4Fe-4S] cluster.

This sequence belongs to the IspG family. [4Fe-4S] cluster is required as a cofactor.

It carries out the reaction (2E)-4-hydroxy-3-methylbut-2-enyl diphosphate + oxidized [flavodoxin] + H2O + 2 H(+) = 2-C-methyl-D-erythritol 2,4-cyclic diphosphate + reduced [flavodoxin]. It functions in the pathway isoprenoid biosynthesis; isopentenyl diphosphate biosynthesis via DXP pathway; isopentenyl diphosphate from 1-deoxy-D-xylulose 5-phosphate: step 5/6. In terms of biological role, converts 2C-methyl-D-erythritol 2,4-cyclodiphosphate (ME-2,4cPP) into 1-hydroxy-2-methyl-2-(E)-butenyl 4-diphosphate. This chain is 4-hydroxy-3-methylbut-2-en-1-yl diphosphate synthase (flavodoxin), found in Nautilia profundicola (strain ATCC BAA-1463 / DSM 18972 / AmH).